Here is a 533-residue protein sequence, read N- to C-terminus: uncharacterized protein (533 aa).

The tract at residues 1-26 is disordered; that stretch reads MKRFFSKLFSKSPTSGRVPSPDSDYS. Phosphoserine occurs at positions 20 and 23. A Phosphotyrosine modification is found at Y25. Phosphoserine is present on S26. 10 consecutive transmembrane segments (helical) span residues 178–198, 213–230, 242–264, 274–296, 313–333, 353–373, 394–414, 435–455, 466–486, and 495–515; these read ILAV…HILI, YMRV…FEAL, PITY…LVWH, APVA…ICFS, LSPM…EWAA, SILL…AVAS, RVAY…IFCF, IFPI…GGGL, GLIS…FVVV, and IWCG…TVLF.

Belongs to the multi antimicrobial extrusion (MATE) (TC 2.A.66.1) family.

The protein resides in the vacuole membrane. This is an uncharacterized protein from Schizosaccharomyces pombe (strain 972 / ATCC 24843) (Fission yeast).